Here is a 372-residue protein sequence, read N- to C-terminus: Tubby-like F-box protein 9 (372 aa).

The tract at residues 1–51 (MALWRCSSSWLSSVSRSSGGVGGGESKVSPEIAPVSGGEGEGEEEEGEEER) is disordered. A compositionally biased stretch (low complexity) spans 7-18 (SSSWLSSVSRSS). Acidic residues predominate over residues 40–49 (GEGEEEEGEE). The region spanning 50–105 (ERWSRLLPELLTEIMRRVDAGAERWPPRRDVVACACVCRRWRDAAVSVVRPPLECG) is the F-box domain.

Belongs to the TUB family. Ubiquitous.

In Oryza sativa subsp. japonica (Rice), this protein is Tubby-like F-box protein 9 (TULP9).